Consider the following 412-residue polypeptide: Putative competence-damage inducible protein (412 aa).

It belongs to the CinA family.

This chain is Putative competence-damage inducible protein, found in Clostridium perfringens (strain SM101 / Type A).